The primary structure comprises 59 residues: Large ribosomal subunit protein uL30 (59 aa).

Belongs to the universal ribosomal protein uL30 family. As to quaternary structure, part of the 50S ribosomal subunit.

The protein is Large ribosomal subunit protein uL30 of Desulforamulus reducens (strain ATCC BAA-1160 / DSM 100696 / MI-1) (Desulfotomaculum reducens).